Here is a 307-residue protein sequence, read N- to C-terminus: Protein pxr1 (307 aa).

A compositionally biased stretch (basic residues) spans 1–11; that stretch reads MGLAAPRKKTK. Disordered stretches follow at residues 1-25 and 144-234; these read MGLA…SRST and NATA…SDCD. Positions 15–25 are enriched in polar residues; it reads DPNNTSWSRST. In terms of domain architecture, G-patch spans 25–79; the sequence is TDGFGHRILKAQGWTPGGFLGARNATHSDLFTTASASHIRVVLKDDTLGLGARPK. 2 stretches are compositionally biased toward basic and acidic residues: residues 154–168 and 206–221; these read LRVD…HESE and GKEL…EKKQ.

Belongs to the PINX1 family.

The protein localises to the nucleus. The protein resides in the nucleolus. Its function is as follows. Involved in rRNA-processing at A0, A1 and A2 sites and negatively regulates telomerase. The protein is Protein pxr1 (pxr1) of Neosartorya fischeri (strain ATCC 1020 / DSM 3700 / CBS 544.65 / FGSC A1164 / JCM 1740 / NRRL 181 / WB 181) (Aspergillus fischerianus).